The sequence spans 835 residues: U-box domain-containing protein 35 (835 aa).

Disordered stretches follow at residues 1–22, 177–303, and 410–457; these read MSRS…SRTV, VRPS…SSNR, and EKEK…LEGT. Over residues 10–19 the composition is skewed to pro residues; sequence LPPPPPPPPS. Over residues 195 to 218 the composition is skewed to low complexity; sequence RTNSSSGSSGPTSDSSDVMSSAHD. Residues 269-282 show a composition bias toward polar residues; sequence SSINRSSTDTTSRW. 2 stretches are compositionally biased toward basic and acidic residues: residues 285–295 and 410–455; these read RRRDYEERKEA and EKEK…EKLE. Residues 340–459 adopt a coiled-coil conformation; it reads QSYTDNQVNL…EKEKLEGTLG (120 aa). One can recognise a Protein kinase domain in the interval 480-745; it reads FSEELKIGMG…DLKDQILPAL (266 aa). Residues 486-494 and Lys507 contribute to the ATP site; that span reads IGMGAYGAV. The active-site Proton acceptor is the Asp602. The 71-residue stretch at 765–835 folds into the U-box domain; the sequence is QPPTHFICPL…TAIMEWRSTR (71 aa).

It belongs to the protein kinase superfamily. Ser/Thr protein kinase family.

It carries out the reaction L-seryl-[protein] + ATP = O-phospho-L-seryl-[protein] + ADP + H(+). The catalysed reaction is L-threonyl-[protein] + ATP = O-phospho-L-threonyl-[protein] + ADP + H(+). The enzyme catalyses S-ubiquitinyl-[E2 ubiquitin-conjugating enzyme]-L-cysteine + [acceptor protein]-L-lysine = [E2 ubiquitin-conjugating enzyme]-L-cysteine + N(6)-ubiquitinyl-[acceptor protein]-L-lysine.. It functions in the pathway protein modification; protein ubiquitination. Functions as an E3 ubiquitin ligase. In Arabidopsis thaliana (Mouse-ear cress), this protein is U-box domain-containing protein 35 (PUB35).